Here is a 92-residue protein sequence, read N- to C-terminus: Small ribosomal subunit protein uS19 (92 aa).

It belongs to the universal ribosomal protein uS19 family.

In terms of biological role, protein S19 forms a complex with S13 that binds strongly to the 16S ribosomal RNA. The protein is Small ribosomal subunit protein uS19 of Rhodospirillum rubrum (strain ATCC 11170 / ATH 1.1.1 / DSM 467 / LMG 4362 / NCIMB 8255 / S1).